A 149-amino-acid chain; its full sequence is MIALLQRVTRASVVVNDVTIGAIGAGLMVLLCAERGDTPKEADALLGKLLAYRVFADDAGKMNRSVTDVAGGVLLVPQFTLAADTCSGTRPSFTPAAAPELARSLFDYFVAQAVQRHVQVATGEFGADMQVSLTNDGPVTFWLQVKPAI.

The Gly-cisPro motif, important for rejection of L-amino acids motif lies at Gly137 to Pro138.

This sequence belongs to the DTD family. In terms of assembly, homodimer.

The protein resides in the cytoplasm. It carries out the reaction glycyl-tRNA(Ala) + H2O = tRNA(Ala) + glycine + H(+). The enzyme catalyses a D-aminoacyl-tRNA + H2O = a tRNA + a D-alpha-amino acid + H(+). Functionally, an aminoacyl-tRNA editing enzyme that deacylates mischarged D-aminoacyl-tRNAs. Also deacylates mischarged glycyl-tRNA(Ala), protecting cells against glycine mischarging by AlaRS. Acts via tRNA-based rather than protein-based catalysis; rejects L-amino acids rather than detecting D-amino acids in the active site. By recycling D-aminoacyl-tRNA to D-amino acids and free tRNA molecules, this enzyme counteracts the toxicity associated with the formation of D-aminoacyl-tRNA entities in vivo and helps enforce protein L-homochirality. The sequence is that of D-aminoacyl-tRNA deacylase from Herminiimonas arsenicoxydans.